Consider the following 498-residue polypeptide: Histidine--tRNA ligase (498 aa).

Belongs to the class-II aminoacyl-tRNA synthetase family. In terms of assembly, homodimer.

The protein localises to the cytoplasm. The catalysed reaction is tRNA(His) + L-histidine + ATP = L-histidyl-tRNA(His) + AMP + diphosphate + H(+). The sequence is that of Histidine--tRNA ligase from Mycoplasmopsis synoviae (strain 53) (Mycoplasma synoviae).